Consider the following 402-residue polypeptide: 1-deoxy-D-xylulose 5-phosphate reductoisomerase (402 aa).

Residues Thr27, Gly28, Ser29, Ile30, Gly53, Lys54, Asn55, and Asn140 each coordinate NADPH. Lys141 is a binding site for 1-deoxy-D-xylulose 5-phosphate. Glu142 provides a ligand contact to NADPH. Asp166 is a Mn(2+) binding site. Positions 167, 168, 192, and 215 each coordinate 1-deoxy-D-xylulose 5-phosphate. Glu168 serves as a coordination point for Mn(2+). Residue Gly221 coordinates NADPH. 4 residues coordinate 1-deoxy-D-xylulose 5-phosphate: Ser228, Asn233, Lys234, and Glu237. Glu237 is a binding site for Mn(2+).

Belongs to the DXR family. It depends on Mg(2+) as a cofactor. Requires Mn(2+) as cofactor.

The enzyme catalyses 2-C-methyl-D-erythritol 4-phosphate + NADP(+) = 1-deoxy-D-xylulose 5-phosphate + NADPH + H(+). The protein operates within isoprenoid biosynthesis; isopentenyl diphosphate biosynthesis via DXP pathway; isopentenyl diphosphate from 1-deoxy-D-xylulose 5-phosphate: step 1/6. In terms of biological role, catalyzes the NADPH-dependent rearrangement and reduction of 1-deoxy-D-xylulose-5-phosphate (DXP) to 2-C-methyl-D-erythritol 4-phosphate (MEP). The sequence is that of 1-deoxy-D-xylulose 5-phosphate reductoisomerase from Lawsonia intracellularis (strain PHE/MN1-00).